The primary structure comprises 233 residues: Uracil-DNA glycosylase (233 aa).

The active-site Proton acceptor is the aspartate 70.

This sequence belongs to the uracil-DNA glycosylase (UDG) superfamily. UNG family.

It localises to the cytoplasm. It carries out the reaction Hydrolyzes single-stranded DNA or mismatched double-stranded DNA and polynucleotides, releasing free uracil.. Its function is as follows. Excises uracil residues from the DNA which can arise as a result of misincorporation of dUMP residues by DNA polymerase or due to deamination of cytosine. The protein is Uracil-DNA glycosylase of Helicobacter acinonychis (strain Sheeba).